Here is a 96-residue protein sequence, read N- to C-terminus: UPF0235 protein YPN_3141 (96 aa).

This sequence belongs to the UPF0235 family.

The protein is UPF0235 protein YPN_3141 of Yersinia pestis bv. Antiqua (strain Nepal516).